Consider the following 267-residue polypeptide: Hydroxyethylthiazole kinase 2 (267 aa).

Residue Met-41 participates in substrate binding. Residues Lys-116 and Thr-166 each contribute to the ATP site. A substrate-binding site is contributed by Gly-193.

The protein belongs to the Thz kinase family. Mg(2+) serves as cofactor.

It catalyses the reaction 5-(2-hydroxyethyl)-4-methylthiazole + ATP = 4-methyl-5-(2-phosphooxyethyl)-thiazole + ADP + H(+). The protein operates within cofactor biosynthesis; thiamine diphosphate biosynthesis; 4-methyl-5-(2-phosphoethyl)-thiazole from 5-(2-hydroxyethyl)-4-methylthiazole: step 1/1. Its function is as follows. Catalyzes the phosphorylation of the hydroxyl group of 4-methyl-5-beta-hydroxyethylthiazole (THZ). In Streptococcus pneumoniae serotype 4 (strain ATCC BAA-334 / TIGR4), this protein is Hydroxyethylthiazole kinase 2.